A 389-amino-acid chain; its full sequence is Protein OSCP1 (389 aa).

Expressed predominantly in testis, also found in placenta and to a lesser extent in thymus and small intestine; abundantly expressed in tumor-derived cell lines. Ubiquitously expressed.

Its subcellular location is the basal cell membrane. May be involved in drug clearance in the placenta. This chain is Protein OSCP1 (OSCP1), found in Homo sapiens (Human).